The chain runs to 197 residues: Ribonuclease HII (197 aa).

The region spanning 14–197 is the RNase H type-2 domain; sequence EKIVGIDEAG…RSFNLGVNDD (184 aa). Positions 20, 21, and 112 each coordinate a divalent metal cation.

Belongs to the RNase HII family. Mn(2+) is required as a cofactor. It depends on Mg(2+) as a cofactor.

The protein localises to the cytoplasm. The enzyme catalyses Endonucleolytic cleavage to 5'-phosphomonoester.. Functionally, endonuclease that specifically degrades the RNA of RNA-DNA hybrids. This chain is Ribonuclease HII, found in Sulfurihydrogenibium sp. (strain YO3AOP1).